Reading from the N-terminus, the 159-residue chain is Phosphopantetheine adenylyltransferase (159 aa).

A substrate-binding site is contributed by threonine 10. Residues 10-11 and histidine 18 contribute to the ATP site; that span reads TF. Substrate contacts are provided by lysine 42, leucine 73, and arginine 87. ATP is bound by residues 88–90, glutamate 98, and 123–129; these read GLR and YSYVSGT.

The protein belongs to the bacterial CoaD family. As to quaternary structure, homohexamer. Mg(2+) is required as a cofactor.

It is found in the cytoplasm. It carries out the reaction (R)-4'-phosphopantetheine + ATP + H(+) = 3'-dephospho-CoA + diphosphate. It functions in the pathway cofactor biosynthesis; coenzyme A biosynthesis; CoA from (R)-pantothenate: step 4/5. Its function is as follows. Reversibly transfers an adenylyl group from ATP to 4'-phosphopantetheine, yielding dephospho-CoA (dPCoA) and pyrophosphate. This is Phosphopantetheine adenylyltransferase from Coxiella burnetii (strain CbuK_Q154) (Coxiella burnetii (strain Q154)).